Consider the following 448-residue polypeptide: Tubulin beta chain (448 aa).

The GTP site is built by Q11, E69, S138, G142, T143, G144, N204, and N226. E69 lines the Mg(2+) pocket. A disordered region spans residues 425 to 448 (YQDASISEGEEEYLEEEEPLEHEE). Positions 432–448 (EGEEEYLEEEEPLEHEE) are enriched in acidic residues.

Belongs to the tubulin family. As to quaternary structure, dimer of alpha and beta chains. A typical microtubule is a hollow water-filled tube with an outer diameter of 25 nm and an inner diameter of 15 nM. Alpha-beta heterodimers associate head-to-tail to form protofilaments running lengthwise along the microtubule wall with the beta-tubulin subunit facing the microtubule plus end conferring a structural polarity. Microtubules usually have 13 protofilaments but different protofilament numbers can be found in some organisms and specialized cells. Mg(2+) is required as a cofactor.

It localises to the cytoplasm. The protein resides in the cytoskeleton. Functionally, tubulin is the major constituent of microtubules, a cylinder consisting of laterally associated linear protofilaments composed of alpha- and beta-tubulin heterodimers. Microtubules grow by the addition of GTP-tubulin dimers to the microtubule end, where a stabilizing cap forms. Below the cap, tubulin dimers are in GDP-bound state, owing to GTPase activity of alpha-tubulin. This Aspergillus flavus protein is Tubulin beta chain.